The following is a 634-amino-acid chain: Ankyrin repeat protein OPG025 (634 aa).

ANK repeat units lie at residues 36–69 (DGET…YKNI), 70–100 (NDFD…EINS), 103–134 (NGIN…PTCS), 175–211 (MGKT…EMRY), 307–337 (IQDL…TLYR), and 412–441 (HGCS…DINI).

The protein belongs to the orthopoxvirus OPG025 family. In terms of assembly, interacts with components of host SCF complex CUL1 and SKP1 and components of the cullin deneddylation/COP9 signalosome complex subunits COPS7A and COPS7B.

Functionally, plays a role in the inhibition of host immune repsonse by counteracting the action of interferons on early events in the viral replication cycle. The polypeptide is Ankyrin repeat protein OPG025 (OPG025) (Vaccinia virus (strain Copenhagen) (VACV)).